Here is a 939-residue protein sequence, read N- to C-terminus: MAIEEKQSRFRISDIARELQVSPREVLQFVKQEGGKVASTSSMVGEEMRDMIFGNFSQEKKLVDETRKIRAEKKKRLTRLEEQSRKAYEKEQQLKESLSSAPSPAPAAHTPEPVKEPFVEIPARHEPAVSPAAPAEQPVIAETPQPESPKEEVVATKAPEAEAKPVEQPEKAAETAVEAQPEAQSQQEPGAEESAEASQTLVQTLPDSMKTYEAPQKIGGLTVLGTIDVSSGSDRKKKSRKKSFKENAAELKDEFEGATSGSSEGGEAGRKKVAKAAGEGESTTGGEDASGKKKKGKKKKKVEVDDKVISKNIKSTISGMDDSGSSGSRQKFRKMRRMERERELEEAEAMREAEKSLIKVTEYASPHELAELMGLTAKDIIQKCFTLGKFVTINQRLDKETIELIAMEFGFDIEFTTEVEATTTEEQVDNPEDMKTRPPVVTIMGHVDHGKTSLLDYIRRSNVVAGESGGITQHIGAYEVTVEGDRQITFLDTPGHEAFTAMRARGAQVTDIVILVVAADDSVMPQTIEAINHSKAAGVPIVVALNKIDKPEANVDKIKTQLSEAGVLVEDWGGEYQCQEISAKKGIGISELMEKVLTEAEVRELKGNYSRDIMASGIIVESELDKGKGVVSTVLVQRGFLKVGDPFVAGNSMGKVRALMDERGKRTDEAGPSTPVRVLGFEDMPQSGDVLTVMESDRDARDLAQKRQIIKREHEFRRSTRVKLDSIARQIKEGLKKELSVIIKADTDGSIQALADGLMKIHNEEVKVQLIHQGVGQITETDVLLAAASDAIIIGFRVRPNVNAKRLAEKEDLDVRFYSVIYHVLEDVEKALEGMLSPELHEESLGSIEIRQVFRVPKVGNVGGAYVLDGKVPRDANVRLLRDGVQIYEGQLDSLKRFKDDVKEVDSGYECGLSLKGYDDIKVGDVVEAYKIVEKKRKL.

The segment covering 81–94 has biased composition (basic and acidic residues); the sequence is EEQSRKAYEKEQQL. Disordered stretches follow at residues 81-303 and 316-337; these read EEQS…KKVE and TISG…KMRR. Low complexity predominate over residues 99-108; sequence SSAPSPAPAA. 2 stretches are compositionally biased toward basic and acidic residues: residues 112-127 and 148-173; these read EPVK…RHEP and SPKE…EKAA. Positions 178–189 are enriched in low complexity; it reads EAQPEAQSQQEP. Residues 244 to 255 show a composition bias toward basic and acidic residues; the sequence is FKENAAELKDEF. Over residues 276-287 the composition is skewed to low complexity; it reads AAGEGESTTGGE. The segment covering 292–301 has biased composition (basic residues); it reads KKKKGKKKKK. Low complexity predominate over residues 318–328; that stretch reads SGMDDSGSSGS. The region spanning 436–606 is the tr-type G domain; it reads TRPPVVTIMG…LTEAEVRELK (171 aa). The segment at 445–452 is G1; that stretch reads GHVDHGKT. GTP is bound at residue 445-452; that stretch reads GHVDHGKT. The interval 470-474 is G2; the sequence is GITQH. Residues 492–495 form a G3 region; sequence DTPG. GTP is bound by residues 492–496 and 546–549; these read DTPGH and NKID. The tract at residues 546 to 549 is G4; it reads NKID. The interval 582 to 584 is G5; the sequence is SAK.

Belongs to the TRAFAC class translation factor GTPase superfamily. Classic translation factor GTPase family. IF-2 subfamily.

The protein resides in the cytoplasm. Functionally, one of the essential components for the initiation of protein synthesis. Protects formylmethionyl-tRNA from spontaneous hydrolysis and promotes its binding to the 30S ribosomal subunits. Also involved in the hydrolysis of GTP during the formation of the 70S ribosomal complex. This Chlorobaculum parvum (strain DSM 263 / NCIMB 8327) (Chlorobium vibrioforme subsp. thiosulfatophilum) protein is Translation initiation factor IF-2.